The chain runs to 161 residues: Ribonuclease H (161 aa).

Residues 11–152 (GPRPVVIHTD…ADQLARDGLT (142 aa)) enclose the RNase H type-1 domain. Mg(2+) contacts are provided by D20, E58, D80, and D144. Residues 137 to 161 (HDENERADQLARDGLTENRMKSRIG) are disordered.

This sequence belongs to the RNase H family. Monomer. It depends on Mg(2+) as a cofactor.

It localises to the cytoplasm. It catalyses the reaction Endonucleolytic cleavage to 5'-phosphomonoester.. Functionally, endonuclease that specifically degrades the RNA of RNA-DNA hybrids. This Rhodopseudomonas palustris (strain HaA2) protein is Ribonuclease H.